Consider the following 1222-residue polypeptide: ATP-dependent helicase/nuclease subunit A (1222 aa).

Residues 39–495 form the UvrD-like helicase ATP-binding domain; that stretch reads QKRTAQQIEA…ILLKENFRSQ (457 aa). ATP is bound at residue 60–67; that stretch reads ASAGSGKT. The UvrD-like helicase C-terminal domain occupies 524–810; that stretch reads QLIAGSHAQT…NLMTIHKSKG (287 aa).

It belongs to the helicase family. AddA subfamily. In terms of assembly, heterodimer of AddA and AddB/RexB. Requires Mg(2+) as cofactor.

It carries out the reaction Couples ATP hydrolysis with the unwinding of duplex DNA by translocating in the 3'-5' direction.. It catalyses the reaction ATP + H2O = ADP + phosphate + H(+). Functionally, the heterodimer acts as both an ATP-dependent DNA helicase and an ATP-dependent, dual-direction single-stranded exonuclease. Recognizes the chi site generating a DNA molecule suitable for the initiation of homologous recombination. The AddA nuclease domain is required for chi fragment generation; this subunit has the helicase and 3' -&gt; 5' nuclease activities. In Streptococcus pyogenes serotype M18 (strain MGAS8232), this protein is ATP-dependent helicase/nuclease subunit A.